The sequence spans 260 residues: Putative ABC transporter ATP-binding protein SCO3161 (260 aa).

The ABC transporter domain occupies 16 to 246 (LDVSGLAFAY…DDLMRAHRLE (231 aa)). 49–56 (GPNGAGKT) serves as a coordination point for ATP.

Belongs to the ABC transporter superfamily.

The protein localises to the cell membrane. Probably part of an ABC transporter complex. Responsible for energy coupling to the transport system. The protein is Putative ABC transporter ATP-binding protein SCO3161 of Streptomyces coelicolor (strain ATCC BAA-471 / A3(2) / M145).